The chain runs to 124 residues: Protein archease (124 aa).

Positions 7, 10, 123, and 124 each coordinate Ca(2+).

Belongs to the archease family.

Functionally, activates the tRNA-splicing ligase complex by facilitating the enzymatic turnover of catalytic subunit RtcB. Acts by promoting the guanylylation of RtcB, a key intermediate step in tRNA ligation. Can also alter the NTP specificity of RtcB such that ATP, dGTP or ITP is used efficiently. May also act as a chaperone or modulator of proteins involved in DNA or RNA processing. The sequence is that of Protein archease from Thermotoga maritima (strain ATCC 43589 / DSM 3109 / JCM 10099 / NBRC 100826 / MSB8).